The primary structure comprises 95 residues: MSFKPLYDRIAIKPIEHEEKTKGGIIIPDTAKEKPMQGEVVAVGKGVRNEKGEVHPLELKVGDKVLYGKWAGTEIKVKGEDLIVMKESDVFGIIN.

This sequence belongs to the GroES chaperonin family. Heptamer of 7 subunits arranged in a ring. Interacts with the chaperonin GroEL.

It is found in the cytoplasm. Together with the chaperonin GroEL, plays an essential role in assisting protein folding. The GroEL-GroES system forms a nano-cage that allows encapsulation of the non-native substrate proteins and provides a physical environment optimized to promote and accelerate protein folding. GroES binds to the apical surface of the GroEL ring, thereby capping the opening of the GroEL channel. The protein is Co-chaperonin GroES of Rickettsia bellii (strain RML369-C).